We begin with the raw amino-acid sequence, 154 residues long: Myoglobin (154 aa).

Positions 2–148 constitute a Globin domain; it reads GLSDGEWQLV…FRNDIAAKYK (147 aa). Position 4 is a phosphoserine (Ser4). His65 is a nitrite binding site. His65 provides a ligand contact to O2. 2 positions are modified to phosphothreonine: Thr68 and Thr75. A heme b-binding site is contributed by His94. A Phosphoserine modification is found at Ser121.

The protein belongs to the globin family. In terms of assembly, monomeric.

Its subcellular location is the cytoplasm. It is found in the sarcoplasm. The enzyme catalyses Fe(III)-heme b-[protein] + nitric oxide + H2O = Fe(II)-heme b-[protein] + nitrite + 2 H(+). It catalyses the reaction H2O2 + AH2 = A + 2 H2O. Monomeric heme protein which primary function is to store oxygen and facilitate its diffusion within muscle tissues. Reversibly binds oxygen through a pentacoordinated heme iron and enables its timely and efficient release as needed during periods of heightened demand. Depending on the oxidative conditions of tissues and cells, and in addition to its ability to bind oxygen, it also has a nitrite reductase activity whereby it regulates the production of bioactive nitric oxide. Under stress conditions, like hypoxia and anoxia, it also protects cells against reactive oxygen species thanks to its pseudoperoxidase activity. This chain is Myoglobin, found in Mus musculus (Mouse).